Here is a 104-residue protein sequence, read N- to C-terminus: Major pilu subunit operon regulatory protein PapB (104 aa).

The protein localises to the cytoplasm. May act as both positive and negative regulator of pap transcription. Might positively regulate levels of papI and/or mbf. Its autoregulatory mode of action involves differential binding to separate sites. This is Major pilu subunit operon regulatory protein PapB (papB) from Escherichia coli.